Reading from the N-terminus, the 805-residue chain is Transmembrane channel-like protein 6 (805 aa).

Residues 1–29 (MAQPLAFILDVPETPGDQGQGPSPYDESE) are disordered. Residues 1-209 (MAQPLAFILD…SCCGRLRYAC (209 aa)) lie on the Lumenal side of the membrane. T89 bears the Phosphothreonine mark. R94 is subject to Omega-N-methylarginine. An N-linked (GlcNAc...) asparagine glycan is attached at N103. Residue T105 is modified to Phosphothreonine. Residues 210–230 (VLALHSLGLALLSALQALMPW) form a helical membrane-spanning segment. Topologically, residues 231–249 (RYALKRIGGQFGSSVLSYF) are cytoplasmic. Residues 250 to 270 (LFLKTLLAFNALLLLLLVAFI) traverse the membrane as a helical segment. Residues 271–338 (MGPQVAFPPA…TPRVGGLPYN (68 aa)) lie on the Lumenal side of the membrane. An N-linked (GlcNAc...) asparagine glycan is attached at N312. The chain crosses the membrane as a helical span at residues 339–359 (MPLAYLSTVGVSFFITCITLV). Over 360–431 (YSMAHSFGES…RSVCGRLRQA (72 aa)) the chain is Cytoplasmic. The helical transmembrane segment at 432 to 452 (AVLGLVWLLCLGTALGCAVAV) threads the bilayer. Over 453–469 (HVFSEFMIQSPEAAGQE) the chain is Lumenal. A helical transmembrane segment spans residues 470–490 (AVLLVLPLVVGLLNLGAPYLC). Residues 491–505 (RVLAALEPHDSPVLE) lie on the Cytoplasmic side of the membrane. Residues 506–526 (VYVAICRNLILKLAILGTLCY) form a helical membrane-spanning segment. The Lumenal portion of the chain corresponds to 527-553 (HWLGRRVGVLQGQCWEDFVGQELYRFL). The chain crosses the membrane as a helical span at residues 554-574 (VMDFVLMLLDTLFGELVWRII). Residues 575 to 604 (SEKKLKRRRKPEFDIARNVLELIYGQTLTW) are Cytoplasmic-facing. A helical transmembrane segment spans residues 605-625 (LGVLFSPLLPAVQIIKLLLVF). The Lumenal portion of the chain corresponds to 626–650 (YVKKTSLLANCQAPRRPWLASHMST). The chain crosses the membrane as a helical span at residues 651 to 671 (VFLTLLCFPAFLGAAVFLCYA). Residues 672-722 (VWQVKPSSTCGPFRTLDTMYEAGRVWVRHLEAAGPRVSWLPWVHRYLMENT) lie on the Cytoplasmic side of the membrane. The chain crosses the membrane as a helical span at residues 723–743 (FFVFLVSALLLAVIYLNIQVV). Topologically, residues 744–805 (RGQRKVICLL…PALLTDEQDA (62 aa)) are lumenal. The segment at 778 to 805 (KEREERSRVGTTEEAAAPPALLTDEQDA) is disordered.

It belongs to the TMC family. As to quaternary structure, interacts with TMC8. Interacts and forms a complex with TMC8 and CIB1; the interaction stabilizes each component of the complex. Interacts and forms a complex with TMC8 and SLC30A1/ZNT1; the interaction regulates zinc transport into the ER. In terms of assembly, (Microbial infection) Interacts with human papillomavirus 16/HPV16 protein E5; the interaction alleviates TMC6-mediated transcription factors inhibition. Expressed in placenta, prostate, testis, activated T-lymphocytes and lymphokine-activated killer (LAK) lymphocytes.

It localises to the endoplasmic reticulum membrane. It is found in the golgi apparatus membrane. Its subcellular location is the nucleus membrane. Acts as a regulatory protein involved in the regulation of numerous cellular processes. Together with its homolog TMC8/EVER2, forms a complex with CIB1 in lymphocytes and keratynocytes where TMC6 and TMC8 stabilize CIB1 and reciprocally. Together with TMC8, also forms a complex with and activates zinc transporter ZNT1 at the ER membrane of keratynocytes, thereby facilitating zinc uptake into the ER. Down-regulates the activity of transcription factors induced by zinc and cytokines. Also plays a role in thermal sensation by inhibiting the M-channel (KCNQ2-KCNQ3 channel) current in primary sensory neurons. This Homo sapiens (Human) protein is Transmembrane channel-like protein 6.